Consider the following 318-residue polypeptide: Putative HTH-type transcriptional regulatory protein MJ1164 (318 aa).

The region spanning 131–189 (LKEVREAMGISVGKLAEVAGVSRKAIYKYETQMANPSVDVALKIEEFLDVPLVKGIDLF) is the HTH cro/C1-type domain. The segment at residues 142–161 (VGKLAEVAGVSRKAIYKYET) is a DNA-binding region (H-T-H motif).

The polypeptide is Putative HTH-type transcriptional regulatory protein MJ1164 (Methanocaldococcus jannaschii (strain ATCC 43067 / DSM 2661 / JAL-1 / JCM 10045 / NBRC 100440) (Methanococcus jannaschii)).